Reading from the N-terminus, the 73-residue chain is Mu-scoloptoxin(15)-Ssd1a (73 aa).

The N-terminal stretch at 1-20 (MKFHIIFCLLAALMMTSAFA) is a signal peptide.

In terms of processing, contains 2 disulfide bonds. Expressed by the venom gland.

It is found in the secreted. In terms of biological role, voltage-gated sodium channel inhibitor. This chain is Mu-scoloptoxin(15)-Ssd1a, found in Scolopendra dehaani (Thai centipede).